The primary structure comprises 461 residues: ADP-specific phosphofructokinase (461 aa).

In terms of domain architecture, ADPK spans 1–457 (MVRELLEKAR…FTSYLAMLKE (457 aa)). Residues glutamate 268, glutamate 298, and aspartate 441 each contribute to the Mg(2+) site. Aspartate 441 acts as the Proton acceptor in catalysis.

It belongs to the carbohydrate kinase PfkC family. Mg(2+) is required as a cofactor.

The protein localises to the cytoplasm. The catalysed reaction is beta-D-fructose 6-phosphate + ADP = beta-D-fructose 1,6-bisphosphate + AMP + H(+). The protein operates within carbohydrate degradation; glycolysis. Its function is as follows. Catalyzes the phosphorylation of fructose 6-phosphate to fructose 1,6-bisphosphate using ADP as the phosphate donor. The sequence is that of ADP-specific phosphofructokinase from Thermococcus kodakarensis (strain ATCC BAA-918 / JCM 12380 / KOD1) (Pyrococcus kodakaraensis (strain KOD1)).